The chain runs to 64 residues: Large ribosomal subunit protein bL33 (64 aa).

This sequence belongs to the bacterial ribosomal protein bL33 family.

The protein is Large ribosomal subunit protein bL33 of Gloeothece citriformis (strain PCC 7424) (Cyanothece sp. (strain PCC 7424)).